Consider the following 236-residue polypeptide: MYNRVVLKLSGEALAGEQGYGIDPTVIQSIAKQIKEITELNIEVAVVVGAGNIWRGMAGSAQGMDRATADYMGMLATVMNSLALQDSLEAIGVESRVQTSIEMRQVAEPYIRRKAIRHLQKKRVVIFAAGTGNPYFSTDTTAALRAAEIEAEVILMAKNNVDGVYNADPRVDDKAQKFDTITYMDVLKDGLQVMDSTASSLCMDNDIPLIVFSIMEEGNIKRAVLGEKIGTTVRGK.

ATP is bound at residue 8–11 (KLSG). Residues 16 to 21 (GEQGYG) form an involved in allosteric activation by GTP region. Positions 51 and 55 each coordinate ATP. UMP-binding positions include D70 and 131–138 (TGNPYFST). 3 residues coordinate ATP: N159, Y165, and D168.

It belongs to the UMP kinase family. As to quaternary structure, homohexamer.

Its subcellular location is the cytoplasm. The enzyme catalyses UMP + ATP = UDP + ADP. It functions in the pathway pyrimidine metabolism; CTP biosynthesis via de novo pathway; UDP from UMP (UMPK route): step 1/1. With respect to regulation, allosterically activated by GTP. Inhibited by UTP. In terms of biological role, catalyzes the reversible phosphorylation of UMP to UDP. The protein is Uridylate kinase of Shouchella clausii (strain KSM-K16) (Alkalihalobacillus clausii).